Consider the following 407-residue polypeptide: Probable beta-1,3-galactosyltransferase 4 (407 aa).

The chain crosses the membrane as a helical; Signal-anchor for type II membrane protein span at residues 23 to 39 (WTLFLCIGFFCAGILFS).

It belongs to the glycosyltransferase 31 family. The cofactor is Mn(2+).

It is found in the golgi apparatus membrane. Its pathway is protein modification; protein glycosylation. Functionally, beta-1,3-galactosyltransferase that transfers galactose from UDP-galactose to substrates with a terminal glycosyl residue. This is Probable beta-1,3-galactosyltransferase 4 (B3GALT4) from Arabidopsis thaliana (Mouse-ear cress).